Reading from the N-terminus, the 566-residue chain is Urease subunit alpha (566 aa).

The Urease domain maps to 128 to 566 (GGVDTHIHFI…LPMAQRYFLF (439 aa)). 3 residues coordinate Ni(2+): H133, H135, and K216. K216 is modified (N6-carboxylysine). H218 serves as a coordination point for substrate. The Ni(2+) site is built by H245 and H271. Residue H319 is the Proton donor of the active site. Position 359 (D359) interacts with Ni(2+).

It belongs to the metallo-dependent hydrolases superfamily. Urease alpha subunit family. May form a heterohexamer of 3 UreC (alpha) and 3 UreAB (gamma/beta) subunits. May also form a heterotrimer of UreA (gamma), UreB (beta) and UreC (alpha) subunits. Three heterotrimers associate to form the active enzyme. It depends on Ni cation as a cofactor. In terms of processing, carboxylation allows a single lysine to coordinate two nickel ions.

Its subcellular location is the cytoplasm. It catalyses the reaction urea + 2 H2O + H(+) = hydrogencarbonate + 2 NH4(+). Its pathway is nitrogen metabolism; urea degradation; CO(2) and NH(3) from urea (urease route): step 1/1. The polypeptide is Urease subunit alpha (Pseudomonas syringae pv. tomato (strain ATCC BAA-871 / DC3000)).